Reading from the N-terminus, the 179-residue chain is Inner membrane-spanning protein YciB (179 aa).

The next 5 membrane-spanning stretches (helical) occupy residues 22 to 42 (IYAATAALIVATAIVLIYSWV), 50 to 70 (MALITFVLVVVFGGLTLFFHN), 76 to 96 (WKVTVIYALFAGALLVSQWVM), 121 to 141 (LAWAVFFILCGLANIYIAFWL), and 149 to 169 (FKVFGLTALTLIFTLLSGIYI).

It belongs to the YciB family.

The protein resides in the cell inner membrane. Functionally, plays a role in cell envelope biogenesis, maintenance of cell envelope integrity and membrane homeostasis. This Shigella boydii serotype 4 (strain Sb227) protein is Inner membrane-spanning protein YciB.